Consider the following 301-residue polypeptide: DSC E3 ubiquitin ligase complex subunit B (301 aa).

Transmembrane regions (helical) follow at residues 9 to 29 (APIT…LSIL), 52 to 72 (LATW…AAML), and 90 to 110 (TFII…LVLL). Positions 268 to 284 (AAAAASGNAGSASEASG) are enriched in low complexity. Positions 268-301 (AAAAASGNAGSASEASGQRQRRREGGIMDRLRAL) are disordered. The segment covering 290–301 (REGGIMDRLRAL) has biased composition (basic and acidic residues).

In terms of assembly, component of the DSC E3 ubiquitin ligase complex composed of dscA, dscB, dscC and dscD.

The protein localises to the endoplasmic reticulum membrane. It carries out the reaction S-ubiquitinyl-[E2 ubiquitin-conjugating enzyme]-L-cysteine + [acceptor protein]-L-lysine = [E2 ubiquitin-conjugating enzyme]-L-cysteine + N(6)-ubiquitinyl-[acceptor protein]-L-lysine.. It participates in protein modification; protein ubiquitination. In terms of biological role, component of the DSC E3 ubiquitin ligase complex which is required for the srbA transcriptional activator proteolytic cleavage to release the soluble transcription factor from the membrane in low oxygen or sterol conditions. Required for growth during hypoxia and triazole drug susceptibility, as well as for virulence in a murine model of invasive pulmonary aspergillosis (IPA). The polypeptide is DSC E3 ubiquitin ligase complex subunit B (Aspergillus fumigatus (strain ATCC MYA-4609 / CBS 101355 / FGSC A1100 / Af293) (Neosartorya fumigata)).